The primary structure comprises 873 residues: Leucine--tRNA ligase (873 aa).

The 'HIGH' region signature appears at 42–52 (PYPSGKLHMGH). Residues 628-632 (KMAKS) carry the 'KMSKS' region motif. Lys631 contributes to the ATP binding site.

It belongs to the class-I aminoacyl-tRNA synthetase family.

Its subcellular location is the cytoplasm. It catalyses the reaction tRNA(Leu) + L-leucine + ATP = L-leucyl-tRNA(Leu) + AMP + diphosphate. The sequence is that of Leucine--tRNA ligase from Aromatoleum aromaticum (strain DSM 19018 / LMG 30748 / EbN1) (Azoarcus sp. (strain EbN1)).